The chain runs to 400 residues: Protein phosphatase methylesterase 1 (400 aa).

The interval 32 to 70 (DENDGDALGSLPSFNGQSNRNRKYTGKTGSTTDRISSKE) is disordered. Positions 114–365 (PIFIFHHGAG…DSGHFIQEDS (252 aa)) constitute an AB hydrolase-1 domain. Active-site residues include Ser-205, Asp-233, and His-359.

It belongs to the AB hydrolase superfamily. Interacts with and inactivates the phosphatase PP2A-like catalytic subunits PPG1, PPH21, PPH22, PPH3 and SIT4.

It carries out the reaction [phosphatase 2A protein]-C-terminal L-leucine methyl ester + H2O = [phosphatase 2A protein]-C-terminal L-leucine + methanol + H(+). Functionally, demethylates proteins that have been reversibly carboxymethylated. Demethylates the phosphatase PP2A catalytic subunits PPH21 and PPH22. Forms inactive complexes (PP2Ai) with phosphatase PP2A-like catalytic subunits. Involved in the regulation of cell cycle progression at START. This Saccharomyces cerevisiae (strain ATCC 204508 / S288c) (Baker's yeast) protein is Protein phosphatase methylesterase 1 (PPE1).